Consider the following 244-residue polypeptide: Thiol S-methyltransferase TMT1A (244 aa).

The interval 1–28 (MELTIFILRLAIYILTFPLYLLNFLGLW) is targeting to lipid droplets. The signal sequence occupies residues 1-29 (MELTIFILRLAIYILTFPLYLLNFLGLWS).

The protein belongs to the methyltransferase superfamily. (Microbial infection) Interacts with HCV non-structural protein 4B/NS4B (via C-terminal region); this interaction may promote the recruitment of NS4B in the proximity of lipid droplet. In terms of assembly, self-associates. Interacts with SNRNP200; this interaction may promote the odontogenic differentiation. In terms of processing, methylated at lysine residues most likely by EZH2. As to expression, expressed in the liver.

Its subcellular location is the lipid droplet. It localises to the endoplasmic reticulum. It is found in the membrane. The protein resides in the microsome. The protein localises to the cytoplasm. Its subcellular location is the cytosol. It carries out the reaction a thiol + S-adenosyl-L-methionine = a methyl thioether + S-adenosyl-L-homocysteine + H(+). It catalyses the reaction an adenosine in mRNA + S-adenosyl-L-methionine = an N(6)-methyladenosine in mRNA + S-adenosyl-L-homocysteine + H(+). With respect to regulation, inhibited by 2,3-dichloro-alpha-methylbenzylamine (DCMB). Functionally, thiol S-methyltransferase that catalyzes the transfer of a methyl group from S-adenosyl-L-methionine to alkyl and phenolic thiol-containing acceptor substrates. Together with TMT1B accounts for most of S-thiol methylation activity in the endoplasmic reticulum of hepatocytes. Able to methylate the N6 position of adenosine residues in long non-coding RNAs (lncRNAs). May facilitate lncRNAs transfer into exosomes at the tumor-stroma interface. Promotes osteogenic and odontogenic differentiation by regulating the expression of genes involved in stem cell differentiation and survival. Targeted from the endoplasmic reticulum to lipid droplets, where it recruits cellular proteins to form functional organelles. In terms of biological role, (Microbial infection) May be involved in the assembly and release stages of hepatitis C virus (HCV) life cycle and thus play a crucial role in HCV propagation. The sequence is that of Thiol S-methyltransferase TMT1A from Homo sapiens (Human).